The sequence spans 647 residues: Nucleoside triphosphatase I (647 aa).

The Helicase ATP-binding domain occupies 48 to 212; it reads FIGLKNLNSM…NNLIGLLRPN (165 aa). 61–68 lines the ATP pocket; that stretch reads WDTGTGKT. Residues 150 to 153 carry the DEXH box motif; it reads DEVH. In terms of domain architecture, Helicase C-terminal spans 378-541; sequence YIEACRIILN…KINVVFDLLK (164 aa). The binding to the cap-specific mRNA (nucleoside-2'-O-)-methyltransferase stretch occupies residues 467 to 533; sequence DIIILDMPWN…DIIKNKQGKI (67 aa).

The protein belongs to the helicase family. NPH I subfamily. As to quaternary structure, monomer. Interacts (via C-terminus) with RAP94 (via N-terminus). Interacts with the cap-specific mRNA (nucleoside-2'-O-)-methyltransferase.

It localises to the virion. The catalysed reaction is a ribonucleoside 5'-triphosphate + H2O = a ribonucleoside 5'-diphosphate + phosphate + H(+). In terms of biological role, DNA-dependent ATPase required for providing the needed energy to achieve the termination of early transcripts. Acts in concert with the RAP94 subunit of the virion RNA polymerase and the capping enzyme/VTF to catalyze release of UUUUUNU-containing nascent RNA from the elongation complex. NPH-I must bind ssDNA in order to exhibit ATPase activity. In Choristoneura fumiferana (Spruce budworm moth), this protein is Nucleoside triphosphatase I (NPH1).